Reading from the N-terminus, the 394-residue chain is Elongation factor Tu 2 (394 aa).

One can recognise a tr-type G domain in the interval Lys10 to Glu204. The segment at Gly19–Thr26 is G1. Gly19–Thr26 is a binding site for GTP. A Mg(2+)-binding site is contributed by Thr26. The segment at Gly60 to Asn64 is G2. Residues Asp81–Gly84 form a G3 region. GTP contacts are provided by residues Asp81–His85 and Asn136–Asp139. A G4 region spans residues Asn136–Asp139. Residues Ser174–Leu176 are G5.

Belongs to the TRAFAC class translation factor GTPase superfamily. Classic translation factor GTPase family. EF-Tu/EF-1A subfamily. As to quaternary structure, monomer.

Its subcellular location is the cytoplasm. It catalyses the reaction GTP + H2O = GDP + phosphate + H(+). Its function is as follows. GTP hydrolase that promotes the GTP-dependent binding of aminoacyl-tRNA to the A-site of ribosomes during protein biosynthesis. This Yersinia enterocolitica serotype O:8 / biotype 1B (strain NCTC 13174 / 8081) protein is Elongation factor Tu 2.